A 568-amino-acid chain; its full sequence is MAASAFLLITSFLLILMLLAKPLGNIIANLIDGDIPRWLTKIESGLWRCCGLQKPGGTVKEMNWWQYALAITIFNLTGLLLLFTLLVTQHALPLNPEHFPGLKWDLALNTAISFITNTDWQAYSGENTLSYFSQMTGLTVQNFLSAATGIAVAFALIRTFSRHGVNTAGNAWVDITRITLYLLLPLSMVIALVFVSQGVIQNFEPYQLAHTIEGQPQLIPMGPVASQEAIKLLGTNGGGFFGANSSHPFENPTAISNFIQILSIFLIPCALCFAFGQVVGDNRQGHTLLWAMSIIFVIATVGVMYAELKGNLHFSLLGANSNINMEGKENRFGILATSIYAVVTTAASCGAVNAMHDSFTALGGMIPMWLIQIGEVVFGGVGSGLYGMLLFVLLTVFIAGLMIGRAPEYLGKKIEVFEMKMVALAILVTPTLALLGTALTISTASGRAGILNPGAHGFSEVLYALSSTANNNGSAFAGLNTNNMFYNLLLAIILFLGRFGMILPVLAIAGSLAVKKRQPASNGTLPTYGPLFISLLILTIMLIGALTFIPALILGPVIEHLQIWLMAR.

The next 12 membrane-spanning stretches (helical) occupy residues 7–27 (LLITSFLLILMLLAKPLGNII), 67–87 (YALAITIFNLTGLLLLFTLLV), 137–157 (GLTVQNFLSAATGIAVAFALI), 180–200 (LYLLLPLSMVIALVFVSQGVI), 258–278 (FIQILSIFLIPCALCFAFGQV), 288–308 (LLWAMSIIFVIATVGVMYAEL), 332–352 (FGILATSIYAVVTTAASCGAV), 361–381 (ALGGMIPMWLIQIGEVVFGGV), 384–404 (GLYGMLLFVLLTVFIAGLMIG), 421–441 (MVALAILVTPTLALLGTALTI), 488–508 (LLLAIILFLGRFGMILPVLAI), and 535–555 (LLILTIMLIGALTFIPALILG).

It belongs to the KdpA family. The system is composed of three essential subunits: KdpA, KdpB and KdpC.

It is found in the cell inner membrane. In terms of biological role, part of the high-affinity ATP-driven potassium transport (or Kdp) system, which catalyzes the hydrolysis of ATP coupled with the electrogenic transport of potassium into the cytoplasm. This subunit binds the periplasmic potassium ions and delivers the ions to the membrane domain of KdpB through an intramembrane tunnel. The polypeptide is Potassium-transporting ATPase potassium-binding subunit (Photorhabdus laumondii subsp. laumondii (strain DSM 15139 / CIP 105565 / TT01) (Photorhabdus luminescens subsp. laumondii)).